The primary structure comprises 277 residues: Thymidylate synthase (277 aa).

Arginine 21 serves as a coordination point for dUMP. Position 51 (histidine 51) interacts with (6R)-5,10-methylene-5,6,7,8-tetrahydrofolate. Residue arginine 126–arginine 127 participates in dUMP binding. The active-site Nucleophile is the cysteine 159. DUMP contacts are provided by residues arginine 179–aspartate 182, asparagine 190, and histidine 220–tyrosine 222. (6R)-5,10-methylene-5,6,7,8-tetrahydrofolate is bound at residue aspartate 182. (6R)-5,10-methylene-5,6,7,8-tetrahydrofolate is bound at residue alanine 276.

The protein belongs to the thymidylate synthase family. Bacterial-type ThyA subfamily. As to quaternary structure, homodimer.

The protein resides in the cytoplasm. The enzyme catalyses dUMP + (6R)-5,10-methylene-5,6,7,8-tetrahydrofolate = 7,8-dihydrofolate + dTMP. It functions in the pathway pyrimidine metabolism; dTTP biosynthesis. In terms of biological role, catalyzes the reductive methylation of 2'-deoxyuridine-5'-monophosphate (dUMP) to 2'-deoxythymidine-5'-monophosphate (dTMP) while utilizing 5,10-methylenetetrahydrofolate (mTHF) as the methyl donor and reductant in the reaction, yielding dihydrofolate (DHF) as a by-product. This enzymatic reaction provides an intracellular de novo source of dTMP, an essential precursor for DNA biosynthesis. The polypeptide is Thymidylate synthase (Thioalkalivibrio sulfidiphilus (strain HL-EbGR7)).